The following is an 89-amino-acid chain: Small ribosomal subunit protein uS15 (89 aa).

It belongs to the universal ribosomal protein uS15 family. In terms of assembly, part of the 30S ribosomal subunit. Forms a bridge to the 50S subunit in the 70S ribosome, contacting the 23S rRNA.

In terms of biological role, one of the primary rRNA binding proteins, it binds directly to 16S rRNA where it helps nucleate assembly of the platform of the 30S subunit by binding and bridging several RNA helices of the 16S rRNA. Its function is as follows. Forms an intersubunit bridge (bridge B4) with the 23S rRNA of the 50S subunit in the ribosome. This chain is Small ribosomal subunit protein uS15, found in Salinispora tropica (strain ATCC BAA-916 / DSM 44818 / JCM 13857 / NBRC 105044 / CNB-440).